Here is a 158-residue protein sequence, read N- to C-terminus: 2S seed storage albumin protein (158 aa).

The first 21 residues, 1–21 (MTKFTILLISLLFCIAHTCSA), serve as a signal peptide directing secretion. The Cell attachment site signature appears at 54–56 (RGD). A propeptide spanning residues 65–81 (NHILRTMRGRINYIRRN) is cleaved from the precursor.

The protein belongs to the 2S seed storage albumins family. The protein consists of two chains linked by 2 disulfide bonds. In terms of tissue distribution, expressed in cotyledons. Maximal expression in parenchyma cells undergoing DNA endoreduplication and cell expansion but not in actively dividing cells of the cotyledon.

In terms of biological role, this is a 2S seed storage protein. Its function is as follows. Binds to mammalian chromatin, preventing the normal formation of the kinetochore complex in the centromere and leading to the disruption of mitosis. In Glycine max (Soybean), this protein is 2S seed storage albumin protein.